The chain runs to 118 residues: Holo-[acyl-carrier-protein] synthase (118 aa).

2 residues coordinate Mg(2+): aspartate 8 and glutamate 58.

The protein belongs to the P-Pant transferase superfamily. AcpS family. It depends on Mg(2+) as a cofactor.

It localises to the cytoplasm. The enzyme catalyses apo-[ACP] + CoA = holo-[ACP] + adenosine 3',5'-bisphosphate + H(+). Transfers the 4'-phosphopantetheine moiety from coenzyme A to a Ser of acyl-carrier-protein. The chain is Holo-[acyl-carrier-protein] synthase from Streptococcus pyogenes serotype M12 (strain MGAS2096).